Consider the following 212-residue polypeptide: Imidazole glycerol phosphate synthase subunit HisH (212 aa).

Positions 3 to 212 (DVAIIDYGMG…MLANFISWAP (210 aa)) constitute a Glutamine amidotransferase type-1 domain. The active-site Nucleophile is C82. Residues H192 and E194 contribute to the active site.

In terms of assembly, heterodimer of HisH and HisF.

The protein localises to the cytoplasm. The enzyme catalyses 5-[(5-phospho-1-deoxy-D-ribulos-1-ylimino)methylamino]-1-(5-phospho-beta-D-ribosyl)imidazole-4-carboxamide + L-glutamine = D-erythro-1-(imidazol-4-yl)glycerol 3-phosphate + 5-amino-1-(5-phospho-beta-D-ribosyl)imidazole-4-carboxamide + L-glutamate + H(+). It carries out the reaction L-glutamine + H2O = L-glutamate + NH4(+). The protein operates within amino-acid biosynthesis; L-histidine biosynthesis; L-histidine from 5-phospho-alpha-D-ribose 1-diphosphate: step 5/9. In terms of biological role, IGPS catalyzes the conversion of PRFAR and glutamine to IGP, AICAR and glutamate. The HisH subunit catalyzes the hydrolysis of glutamine to glutamate and ammonia as part of the synthesis of IGP and AICAR. The resulting ammonia molecule is channeled to the active site of HisF. The polypeptide is Imidazole glycerol phosphate synthase subunit HisH (Aromatoleum aromaticum (strain DSM 19018 / LMG 30748 / EbN1) (Azoarcus sp. (strain EbN1))).